The primary structure comprises 192 residues: L-2,4-diaminobutyric acid acetyltransferase (192 aa).

The N-acetyltransferase domain occupies 31–192 (LFIRKPSPDD…RIGPFQTDQI (162 aa)).

This sequence belongs to the acetyltransferase family. EctA subfamily.

It carries out the reaction L-2,4-diaminobutanoate + acetyl-CoA = (2S)-4-acetamido-2-aminobutanoate + CoA + H(+). The protein operates within amine and polyamine biosynthesis; ectoine biosynthesis; L-ectoine from L-aspartate 4-semialdehyde: step 2/3. Catalyzes the acetylation of L-2,4-diaminobutyrate (DABA) to gamma-N-acetyl-alpha,gamma-diaminobutyric acid (ADABA) with acetyl coenzyme A. Does not acetylate amino acids like GABA, L-ornithine, L-lysine and L-aspartate. The polypeptide is L-2,4-diaminobutyric acid acetyltransferase (ectA) (Halomonas elongata (strain ATCC 33173 / DSM 2581 / NBRC 15536 / NCIMB 2198 / 1H9)).